The primary structure comprises 289 residues: MLTDTSTRLNKYISESGICSRREADRFIEQGNVFINGKRAAIGDQVVAGDVVKVNGRLIEPREADDLVLIALNKPVGIVSTTEDGERDNIVDFVNHSKRIFPIGRLDKDSQGLIFLTNHGDLVNKILRAGNDHEKEYLVTVDKPITDEFIRGMGAGVPILGTVTKKCKVKKEAPFVFRITLVQGLNRQIRRMCEYFGYEVTKLERTRIMNVSLSGIPLGEWRDLTDDELIDLFKLIEGSSSEAKPKAKAKPKTAGIKRPVVAIEKSNEKARPASSGKRFTSPGRKKKGR.

The 68-residue stretch at threonine 7–lysine 74 folds into the S4 RNA-binding domain. Interaction with RNA regions lie at residues arginine 105–lysine 108 and arginine 187–arginine 190. The active-site Nucleophile is aspartate 107. Residues serine 241 to arginine 289 form a disordered region.

It belongs to the pseudouridine synthase RsuA family. In terms of assembly, monomer.

The enzyme catalyses uridine(2604) in 23S rRNA = pseudouridine(2604) in 23S rRNA. It catalyses the reaction uridine(35) in tRNA(Tyr) = pseudouridine(35) in tRNA(Tyr). Dual specificity enzyme that catalyzes the synthesis of pseudouridine from uracil-2604 in 23S ribosomal RNA and from uracil-35 in the anticodon of tRNA(Tyr). The sequence is that of Dual-specificity RNA pseudouridine synthase RluF (rluF) from Salmonella typhi.